Reading from the N-terminus, the 204-residue chain is Inactive ribonuclease-like protein 9 (204 aa).

Positions 1–26 (MMRTLITTHPLLLLLLLQQLLQPVQL) are cleaved as a signal peptide. 3 cysteine pairs are disulfide-bonded: Cys-97-Cys-152, Cys-115-Cys-167, and Cys-122-Cys-129. N-linked (GlcNAc...) asparagine glycosylation is found at Asn-130 and Asn-142.

It belongs to the pancreatic ribonuclease family.

It localises to the secreted. Does not exhibit any ribonuclease activity. The sequence is that of Inactive ribonuclease-like protein 9 (RNASE9) from Chlorocebus aethiops (Green monkey).